We begin with the raw amino-acid sequence, 365 residues long: 3-isopropylmalate dehydrogenase (365 aa).

78 to 91 is an NAD(+) binding site; sequence GKKWNNLPIEKRPE. Substrate-binding residues include Arg-99, Arg-109, Arg-139, and Asp-228. Mg(2+) contacts are provided by Asp-228, Asp-252, and Asp-256. NAD(+) is bound at residue 286–298; that stretch reads GSAPDIAGKNIAN.

The protein belongs to the isocitrate and isopropylmalate dehydrogenases family. LeuB type 1 subfamily. As to quaternary structure, homodimer. Mg(2+) is required as a cofactor. The cofactor is Mn(2+).

The protein resides in the cytoplasm. The catalysed reaction is (2R,3S)-3-isopropylmalate + NAD(+) = 4-methyl-2-oxopentanoate + CO2 + NADH. The protein operates within amino-acid biosynthesis; L-leucine biosynthesis; L-leucine from 3-methyl-2-oxobutanoate: step 3/4. In terms of biological role, catalyzes the oxidation of 3-carboxy-2-hydroxy-4-methylpentanoate (3-isopropylmalate) to 3-carboxy-4-methyl-2-oxopentanoate. The product decarboxylates to 4-methyl-2 oxopentanoate. In Buchnera aphidicola subsp. Macrosiphoniella ludovicianae, this protein is 3-isopropylmalate dehydrogenase.